We begin with the raw amino-acid sequence, 112 residues long: T cell receptor alpha variable 7 (112 aa).

Residues 1–21 form the signal peptide; that stretch reads MEKMRRPVLIIFCLCLGWANG. The Ig-like domain occupies 22–112; sequence ENQVEHSPHF…DSATYFCAVD (91 aa). The cysteines at positions 44 and 109 are disulfide-linked. N-linked (GlcNAc...) asparagine glycans are attached at residues N84 and N90.

In terms of assembly, alpha-beta TR is a heterodimer composed of an alpha and beta chain; disulfide-linked. The alpha-beta TR is associated with the transmembrane signaling CD3 coreceptor proteins to form the TR-CD3 (TcR or TCR). The assembly of alpha-beta TR heterodimers with CD3 occurs in the endoplasmic reticulum where a single alpha-beta TR heterodimer associates with one CD3D-CD3E heterodimer, one CD3G-CD3E heterodimer and one CD247 homodimer forming a stable octameric structure. CD3D-CD3E and CD3G-CD3E heterodimers preferentially associate with TR alpha and TR beta chains, respectively. The association of the CD247 homodimer is the last step of TcR assembly in the endoplasmic reticulum and is required for transport to the cell surface.

Its subcellular location is the cell membrane. Functionally, v region of the variable domain of T cell receptor (TR) alpha chain that participates in the antigen recognition. Alpha-beta T cell receptors are antigen specific receptors which are essential to the immune response and are present on the cell surface of T lymphocytes. Recognize peptide-major histocompatibility (MH) (pMH) complexes that are displayed by antigen presenting cells (APC), a prerequisite for efficient T cell adaptive immunity against pathogens. Binding of alpha-beta TR to pMH complex initiates TR-CD3 clustering on the cell surface and intracellular activation of LCK that phosphorylates the ITAM motifs of CD3G, CD3D, CD3E and CD247 enabling the recruitment of ZAP70. In turn ZAP70 phosphorylates LAT, which recruits numerous signaling molecules to form the LAT signalosome. The LAT signalosome propagates signal branching to three major signaling pathways, the calcium, the mitogen-activated protein kinase (MAPK) kinase and the nuclear factor NF-kappa-B (NF-kB) pathways, leading to the mobilization of transcription factors that are critical for gene expression and essential for T cell growth and differentiation. The T cell repertoire is generated in the thymus, by V-(D)-J rearrangement. This repertoire is then shaped by intrathymic selection events to generate a peripheral T cell pool of self-MH restricted, non-autoaggressive T cells. Post-thymic interaction of alpha-beta TR with the pMH complexes shapes TR structural and functional avidity. The chain is T cell receptor alpha variable 7 from Homo sapiens (Human).